The sequence spans 255 residues: Uridylate kinase (255 aa).

22–25 (KLSG) is a binding site for ATP. Residues 30 to 35 (GNGGYG) are involved in allosteric activation by GTP. Glycine 64 is a UMP binding site. ATP contacts are provided by glycine 65 and arginine 69. UMP contacts are provided by residues aspartate 85 and 146–153 (TGNPFFTT). ATP-binding residues include asparagine 174, tyrosine 180, and aspartate 183.

Belongs to the UMP kinase family. In terms of assembly, homohexamer.

It localises to the cytoplasm. It carries out the reaction UMP + ATP = UDP + ADP. The protein operates within pyrimidine metabolism; CTP biosynthesis via de novo pathway; UDP from UMP (UMPK route): step 1/1. Allosterically activated by GTP. Inhibited by UTP. Catalyzes the reversible phosphorylation of UMP to UDP. The protein is Uridylate kinase of Rubrobacter xylanophilus (strain DSM 9941 / JCM 11954 / NBRC 16129 / PRD-1).